The primary structure comprises 159 residues: Eukaryotic translation initiation factor 5A-4 (159 aa).

Positions 1–12 (MSDEEHQFESKA) are enriched in basic and acidic residues. The disordered stretch occupies residues 1–21 (MSDEEHQFESKADAGASKTYP). Lys-52 is subject to Hypusine.

It belongs to the eIF-5A family. Lys-52 undergoes hypusination, a unique post-translational modification that consists in the addition of a butylamino group from spermidine to lysine side chain, leading to the formation of the unusual amino acid hypusine. eIF-5As are the only known proteins to undergo this modification, which is essential for their function.

Translation factor that promotes translation elongation and termination, particularly upon ribosome stalling at specific amino acid sequence contexts. Binds between the exit (E) and peptidyl (P) site of the ribosome and promotes rescue of stalled ribosome: specifically required for efficient translation of polyproline-containing peptides as well as other motifs that stall the ribosome. Acts as a ribosome quality control (RQC) cofactor by joining the RQC complex to facilitate peptidyl transfer during CAT tailing step. This chain is Eukaryotic translation initiation factor 5A-4 (EIF5A4), found in Solanum tuberosum (Potato).